The chain runs to 384 residues: Queuine tRNA-ribosyltransferase (384 aa).

Asp-103 acts as the Proton acceptor in catalysis. Residues 103–107 (DSGGF), Asp-157, Gln-200, and Gly-227 contribute to the substrate site. Residues 258-264 (GVGTYRE) are RNA binding. Asp-277 functions as the Nucleophile in the catalytic mechanism. Positions 282 to 286 (TRLAR) are RNA binding; important for wobble base 34 recognition. Cys-315, Cys-317, Cys-320, and His-346 together coordinate Zn(2+).

This sequence belongs to the queuine tRNA-ribosyltransferase family. Homodimer. Within each dimer, one monomer is responsible for RNA recognition and catalysis, while the other monomer binds to the replacement base PreQ1. Zn(2+) serves as cofactor.

The enzyme catalyses 7-aminomethyl-7-carbaguanine + guanosine(34) in tRNA = 7-aminomethyl-7-carbaguanosine(34) in tRNA + guanine. It participates in tRNA modification; tRNA-queuosine biosynthesis. In terms of biological role, catalyzes the base-exchange of a guanine (G) residue with the queuine precursor 7-aminomethyl-7-deazaguanine (PreQ1) at position 34 (anticodon wobble position) in tRNAs with GU(N) anticodons (tRNA-Asp, -Asn, -His and -Tyr). Catalysis occurs through a double-displacement mechanism. The nucleophile active site attacks the C1' of nucleotide 34 to detach the guanine base from the RNA, forming a covalent enzyme-RNA intermediate. The proton acceptor active site deprotonates the incoming PreQ1, allowing a nucleophilic attack on the C1' of the ribose to form the product. After dissociation, two additional enzymatic reactions on the tRNA convert PreQ1 to queuine (Q), resulting in the hypermodified nucleoside queuosine (7-(((4,5-cis-dihydroxy-2-cyclopenten-1-yl)amino)methyl)-7-deazaguanosine). This Synechococcus elongatus (strain ATCC 33912 / PCC 7942 / FACHB-805) (Anacystis nidulans R2) protein is Queuine tRNA-ribosyltransferase.